The primary structure comprises 247 residues: Homeobox protein BarH-like 1b (247 aa).

Disordered stretches follow at residues 118-138 (RGKL…GRRS) and 197-247 (GGGL…SQEE). The homeobox DNA-binding region spans 135-194 (GRRSRTVFTELQLMGLEKRFEKQKYLSTPDRIDLAESLGLSQLQVKTWYQNRRMKWKKIV). Residues 223–234 (EQERARDAEKPP) are compositionally biased toward basic and acidic residues.

Belongs to the BAR homeobox family. In terms of assembly, interacts with serum response factor (SRF). As to expression, expressed in smooth muscle cells of the upper digestive organs and their attached arteries and to craniofacial structures.

The protein resides in the nucleus. Its function is as follows. Transcription factor which is involved with the serum response factor (SRF) in the smooth muscle cell-specific transcription of the beta-tropomyosin gene in the upper digestive organs and their attached arteries. This is Homeobox protein BarH-like 1b (BARX1B) from Gallus gallus (Chicken).